Here is a 98-residue protein sequence, read N- to C-terminus: Serine rich endogenous peptide 10 (98 aa).

Positions 1–29 (MERKKFSSKFIHLLIVFLLLCTFLSRTES) are cleaved as a signal peptide. The disordered stretch occupies residues 50–98 (NSAIGTPSSTSDHAPGSNGRKLMSIYRPNGDIFTGPSGSGHGGGRTPAP). Positions 52–61 (AIGTPSSTSD) are enriched in polar residues. 2 consecutive short sequence motifs (SCOOP motif) follow at residues 52-66 (AIGTPSSTSDHAPGS) and 80-94 (DIFTGPSGSGHGGGR). Short sequence motifs (sxS motif essential for MIK2 binding) lie at residues 58–60 (STS) and 86–88 (SGS). Gly residues predominate over residues 86–98 (SGSGHGGGRTPAP).

It belongs to the serine rich endogenous peptide (SCOOP) phytocytokine family. Interacts with MIK2 (via extracellular leucine-rich repeat domain); this interaction triggers the formation of complex between MIK2 and the BAK1/SERK3 and SERK4 coreceptors, and subsequent BAK1 activation by phosphorylation. As to expression, mostly expressed in leaves and seedlings shoots, to a lower extent, in roots, but barely in flowers.

It is found in the cell membrane. The protein resides in the secreted. The protein localises to the extracellular space. It localises to the apoplast. In terms of biological role, brassicaceae-specific phytocytokine (plant endogenous peptide released into the apoplast) perceived by MIK2 in a BAK1/SERK3 and SERK4 coreceptors-dependent manner, that modulates various physiological and antimicrobial processes including growth prevention and reactive oxygen species (ROS) response regulation. Inhibits root growth and regulates root meristems. Promotes ROS production and MAPK (e.g. MPK3, MPK4 and MPK6) activation in a MIK2-dependent manner, thus leading to the up-regulation of immune-related marker genes (e.g. WRKY30, WRKY33 and CYP81F2). This is Serine rich endogenous peptide 10 from Arabidopsis thaliana (Mouse-ear cress).